The primary structure comprises 480 residues: MAPNTDIGLIGLAVMGKNLVLNMVDHGFSVSVYNRSPAKTEEFLKDHGESGALQGFTTIQEFVQSLKRPRKIMIMIKAGAPVDEMIASLLPFLEEGDILIDGGNSYYLDSEQRYVDLKKEGILFVGMGVSGGEEGARKGPSIMPGGNIDAWPAIAPIFQSIAAQVDGRPCCSWIGTGGAGHFVKAVHNGIEYGDIQLICETYEILKTRLNLSLEQIGNIFFEWNQTDLNSYLIGAAAAVLIAKDENGNAIASTILDVAGQKGTGRWVAEDAIKAGVPMSLIIESVLARYLSTWKEVRTKAAQEFPGIPLLCQPPQEASAFIEDVREALYAAKIISYAQGFMLLKQVSQDKGWDLNLGELALIWRGGCIIQSAFLDKIHQGFENSPEAHSLILQDYFKKVLFDSETGFRRAVLHAIGSGVAIPCLSSALSFYDGYRTVDSSLFLVQGLRDYFGAHGYERRDCPRGEFYHTDWLETKKTFRV.

NADP(+)-binding positions include 11 to 16 (GLAVMG), 34 to 36 (NRS), 76 to 78 (IKA), and N104. Residues N104 and 130-132 (SGG) contribute to the substrate site. The Proton acceptor role is filled by K184. 187–188 (HN) lines the substrate pocket. Residue E191 is the Proton donor of the active site. Y192, K261, R288, R448, and H454 together coordinate substrate.

It belongs to the 6-phosphogluconate dehydrogenase family. As to quaternary structure, homodimer.

The enzyme catalyses 6-phospho-D-gluconate + NADP(+) = D-ribulose 5-phosphate + CO2 + NADPH. The protein operates within carbohydrate degradation; pentose phosphate pathway; D-ribulose 5-phosphate from D-glucose 6-phosphate (oxidative stage): step 3/3. Functionally, catalyzes the oxidative decarboxylation of 6-phosphogluconate to ribulose 5-phosphate and CO(2), with concomitant reduction of NADP to NADPH. In Chlamydia trachomatis serovar D (strain ATCC VR-885 / DSM 19411 / UW-3/Cx), this protein is 6-phosphogluconate dehydrogenase, decarboxylating (gnd).